A 321-amino-acid chain; its full sequence is Putrescine export system permease protein SapB (321 aa).

The Cytoplasmic portion of the chain corresponds to 1–8 (MIIFTLRR). A helical membrane pass occupies residues 9–29 (ILLLIVTLFLLTFVGFSLSYF). Residues 30–80 (TPHAPLQGASLWNAWVFWFNGLIHWDFGVSSINGQPIAEQLKEVFPATMEL) are Periplasmic-facing. One can recognise an ABC transmembrane type-1 domain in the interval 74–302 (FPATMELCIL…SLVIIVNVIS (229 aa)). The chain crosses the membrane as a helical span at residues 81–101 (CILAFGFALIVGIPVGMIAGI). Residues 102 to 112 (TRHKWQDNLIN) lie on the Cytoplasmic side of the membrane. The helical transmembrane segment at 113-133 (AIALLGFSIPVFWLALLLTLF) threads the bilayer. Residues 134–174 (CSLTLGWLPVSGRFDLLYEVKPITGFALIDAWLSDSPWRDE) are Periplasmic-facing. A helical membrane pass occupies residues 175–195 (MIMSAIRHMILPVITLSVAPT). At 196-248 (TEVIRLMRISTIEVYDQNYVKAAATRGLSRFTILRRHVLHNALPPVIPRLGLQ) the chain is on the cytoplasmic side. Residues 249-269 (FSTMLTLAMITEMVFSWPGLG) form a helical membrane-spanning segment. Residues 270–280 (RWLINAIRQQD) lie on the Periplasmic side of the membrane. Residues 281–301 (YAAISAGVMVCGSLVIIVNVI) traverse the membrane as a helical segment. Residues 302–321 (SDILGAMANPLKHKEWYALR) lie on the Cytoplasmic side of the membrane.

The protein belongs to the binding-protein-dependent transport system permease family. OppBC subfamily.

It is found in the cell inner membrane. Part of a putrescine export transport system, does not play a role in resistance to antimicrobial peptides. The protein is Putrescine export system permease protein SapB (sapB) of Escherichia coli (strain K12).